A 109-amino-acid polypeptide reads, in one-letter code: Parvalbumin beta 2 (109 aa).

Alanine 2 is subject to N-acetylalanine. 2 EF-hand domains span residues 39–74 (KSPADIKKVFEIIDQDKSDFVEEDELKLFLQNFSAG) and 78–109 (LSDAETKVFLKAGDSDGDGKIGVDEFGAMIKA). Ca(2+)-binding residues include aspartate 52, aspartate 54, serine 56, phenylalanine 58, glutamate 60, glutamate 63, aspartate 91, aspartate 93, aspartate 95, lysine 97, and glutamate 102.

This sequence belongs to the parvalbumin family. As to quaternary structure, monomer.

Functionally, in muscle, parvalbumin is thought to be involved in relaxation after contraction. It binds two calcium ions. In Gadus morhua (Atlantic cod), this protein is Parvalbumin beta 2.